The sequence spans 426 residues: Pyrophosphate--fructose 6-phosphate 1-phosphotransferase 2 (426 aa).

Gly15 is a binding site for diphosphate. Asp114 is a binding site for Mg(2+). Residues 140–142 (TID), 186–188 (MGR), Glu247, and 308–311 (YELR) each bind substrate. Catalysis depends on Asp142, which acts as the Proton acceptor.

This sequence belongs to the phosphofructokinase type A (PFKA) family. PPi-dependent PFK group II subfamily. Clade 'Short' sub-subfamily. In terms of assembly, homotetramer. It depends on Mg(2+) as a cofactor.

The protein resides in the cytoplasm. The enzyme catalyses beta-D-fructose 6-phosphate + diphosphate = beta-D-fructose 1,6-bisphosphate + phosphate + H(+). It participates in carbohydrate degradation; glycolysis; D-glyceraldehyde 3-phosphate and glycerone phosphate from D-glucose: step 3/4. Its activity is regulated as follows. Non-allosteric. Functionally, catalyzes the phosphorylation of D-fructose 6-phosphate, the first committing step of glycolysis. Uses inorganic phosphate (PPi) as phosphoryl donor instead of ATP like common ATP-dependent phosphofructokinases (ATP-PFKs), which renders the reaction reversible, and can thus function both in glycolysis and gluconeogenesis. Consistently, PPi-PFK can replace the enzymes of both the forward (ATP-PFK) and reverse (fructose-bisphosphatase (FBPase)) reactions. The protein is Pyrophosphate--fructose 6-phosphate 1-phosphotransferase 2 (pfk2) of Trichomonas vaginalis (strain ATCC PRA-98 / G3).